A 289-amino-acid chain; its full sequence is Agroclavine dehydrogenase (289 aa).

Belongs to the fgaFS/easG family. As to quaternary structure, monomer.

The enzyme catalyses agroclavine + NADP(+) = didehydroagroclavine + NADPH + H(+). It functions in the pathway alkaloid biosynthesis; ergot alkaloid biosynthesis. In terms of biological role, agroclavine dehydrogenase; part of the gene cluster that mediates the biosynthesis of fungal ergot alkaloid ergovaline, the predominant ergopeptine product in E.festucae var. lolii. DmaW catalyzes the first step of ergot alkaloid biosynthesis by condensing dimethylallyl diphosphate (DMAP) and tryptophan to form 4-dimethylallyl-L-tryptophan. The second step is catalyzed by the methyltransferase easF that methylates 4-dimethylallyl-L-tryptophan in the presence of S-adenosyl-L-methionine, resulting in the formation of 4-dimethylallyl-L-abrine. The catalase easC and the FAD-dependent oxidoreductase easE then transform 4-dimethylallyl-L-abrine to chanoclavine-I which is further oxidized by easD in the presence of NAD(+), resulting in the formation of chanoclavine-I aldehyde. Agroclavine dehydrogenase easG then mediates the conversion of chanoclavine-I aldehyde to agroclavine via a non-enzymatic adduct reaction: the substrate is an iminium intermediate that is formed spontaneously from chanoclavine-I aldehyde in the presence of glutathione. Further conversion of agroclavine to paspalic acid is a two-step process involving oxidation of agroclavine to elymoclavine and of elymoclavine to paspalic acid, the second step being performed by the elymoclavine oxidase cloA. However, cloA does not encode a functional enzyme indicating that C.fusiformis terminates its ergot alkaloid pathway at elymoclavine. This Claviceps fusiformis (Ergot fungus) protein is Agroclavine dehydrogenase.